Reading from the N-terminus, the 535-residue chain is MNKLLVFILLLLLLINISFARKRSYIKNTDASIVVTQFGAIKGIVEDTHRVFYGVPFAQPPVNQLRWENPIDLKPWENVRETLTQKSQCAQKCNLGPGVCSPIGTSEDCLYLDVFTPKDATPNSKYPVIVYIPGGAFSVGSGSVPLYDATKFAQSSVIVVNINYRLGVLGFMGTDLMHGNYGFLDQIKALEWVYNNIGSFGGNKEMITIWGESAGAFSVSAHLTSTYSRQYFNAAISSSSPLTVGLKDKTTARGNANRFATNVGCNIEDLTCLRGKSMDEILDAQEKVGLTFGDKILDAFTIWSPVIDGDIIPMQPLTAVKEGKTYDVPTIIGNVKHEAIPFIYSFFQDSVGIDYYRVLVAIVFPLNAMKILPLYPAAPRGQDSRPILSELITDYLFRCPDRYHTVTNAKKLSSPTYHYHYVHVKSTGHSLDACDDKVCHGTELSLFFNSYELMGERLDNDEKELAIDINNYIVNFATTHNPNTGLDVPVQWRQVTSTQNSTLILETTIETKDTFTNDPKCNALDLTYYRNQVRP.

The N-terminal stretch at 1–20 is a signal peptide; that stretch reads MNKLLVFILLLLLLINISFA. A disulfide bridge connects residues Cys89 and Cys109. Ser213 (acyl-ester intermediate) is an active-site residue. An intrachain disulfide couples Cys265 to Cys272. Residues Glu338 and His440 each act as charge relay system in the active site. Asn500 carries an N-linked (GlcNAc...) asparagine glycan.

The protein belongs to the type-B carboxylesterase/lipase family.

Its subcellular location is the cytoplasmic vesicle. The protein localises to the esterosome membrane. This chain is cAMP-regulated D2 protein (D2), found in Dictyostelium discoideum (Social amoeba).